The chain runs to 60 residues: Large ribosomal subunit protein uL30 (60 aa).

It belongs to the universal ribosomal protein uL30 family. In terms of assembly, part of the 50S ribosomal subunit.

This chain is Large ribosomal subunit protein uL30, found in Clavibacter michiganensis subsp. michiganensis (strain NCPPB 382).